The following is a 240-amino-acid chain: Ubiquinone biosynthesis O-methyltransferase (240 aa).

Arg-36, Gly-60, Asp-81, and Leu-123 together coordinate S-adenosyl-L-methionine.

The protein belongs to the methyltransferase superfamily. UbiG/COQ3 family.

The enzyme catalyses a 3-demethylubiquinol + S-adenosyl-L-methionine = a ubiquinol + S-adenosyl-L-homocysteine + H(+). It catalyses the reaction a 3-(all-trans-polyprenyl)benzene-1,2-diol + S-adenosyl-L-methionine = a 2-methoxy-6-(all-trans-polyprenyl)phenol + S-adenosyl-L-homocysteine + H(+). The protein operates within cofactor biosynthesis; ubiquinone biosynthesis. Functionally, O-methyltransferase that catalyzes the 2 O-methylation steps in the ubiquinone biosynthetic pathway. This is Ubiquinone biosynthesis O-methyltransferase from Rickettsia bellii (strain OSU 85-389).